The chain runs to 181 residues: MRILGIDPGLRTTGFGVLERHGHQLVYVASGTIKSDGNADLPSRLKTLYDGVSELVRTYRPDCASIEKVFVNVNPQSTLLLGQARGAVICGLMSGNLPVFEYTALQLKQAVVGYGRANKDQVQDMVVRLLNLEGRPGTDAADALGVAICHAHGGETLAAMAGLAPQLARKGLRVRRGRLVG.

Residues Asp-7, Glu-67, and Asp-139 contribute to the active site. Residues Asp-7, Glu-67, and Asp-139 each coordinate Mg(2+).

This sequence belongs to the RuvC family. Homodimer which binds Holliday junction (HJ) DNA. The HJ becomes 2-fold symmetrical on binding to RuvC with unstacked arms; it has a different conformation from HJ DNA in complex with RuvA. In the full resolvosome a probable DNA-RuvA(4)-RuvB(12)-RuvC(2) complex forms which resolves the HJ. Mg(2+) is required as a cofactor.

It localises to the cytoplasm. The enzyme catalyses Endonucleolytic cleavage at a junction such as a reciprocal single-stranded crossover between two homologous DNA duplexes (Holliday junction).. In terms of biological role, the RuvA-RuvB-RuvC complex processes Holliday junction (HJ) DNA during genetic recombination and DNA repair. Endonuclease that resolves HJ intermediates. Cleaves cruciform DNA by making single-stranded nicks across the HJ at symmetrical positions within the homologous arms, yielding a 5'-phosphate and a 3'-hydroxyl group; requires a central core of homology in the junction. The consensus cleavage sequence is 5'-(A/T)TT(C/G)-3'. Cleavage occurs on the 3'-side of the TT dinucleotide at the point of strand exchange. HJ branch migration catalyzed by RuvA-RuvB allows RuvC to scan DNA until it finds its consensus sequence, where it cleaves and resolves the cruciform DNA. The chain is Crossover junction endodeoxyribonuclease RuvC from Ralstonia nicotianae (strain ATCC BAA-1114 / GMI1000) (Ralstonia solanacearum).